A 271-amino-acid chain; its full sequence is Formamidopyrimidine-DNA glycosylase (271 aa).

Catalysis depends on Pro2, which acts as the Schiff-base intermediate with DNA. The Proton donor role is filled by Glu3. Catalysis depends on Lys57, which acts as the Proton donor; for beta-elimination activity. 3 residues coordinate DNA: His90, Arg109, and Lys151. The FPG-type zinc-finger motif lies at 236-270 (HVYSRGGETCTSCGNLLSEIRLGQRTTVFCGICQT). The active-site Proton donor; for delta-elimination activity is Arg260.

It belongs to the FPG family. As to quaternary structure, monomer. Zn(2+) serves as cofactor.

The catalysed reaction is Hydrolysis of DNA containing ring-opened 7-methylguanine residues, releasing 2,6-diamino-4-hydroxy-5-(N-methyl)formamidopyrimidine.. It catalyses the reaction 2'-deoxyribonucleotide-(2'-deoxyribose 5'-phosphate)-2'-deoxyribonucleotide-DNA = a 3'-end 2'-deoxyribonucleotide-(2,3-dehydro-2,3-deoxyribose 5'-phosphate)-DNA + a 5'-end 5'-phospho-2'-deoxyribonucleoside-DNA + H(+). In terms of biological role, involved in base excision repair of DNA damaged by oxidation or by mutagenic agents. Acts as a DNA glycosylase that recognizes and removes damaged bases. Has a preference for oxidized purines, such as 7,8-dihydro-8-oxoguanine (8-oxoG). Has AP (apurinic/apyrimidinic) lyase activity and introduces nicks in the DNA strand. Cleaves the DNA backbone by beta-delta elimination to generate a single-strand break at the site of the removed base with both 3'- and 5'-phosphates. This chain is Formamidopyrimidine-DNA glycosylase, found in Shewanella baltica (strain OS195).